The sequence spans 180 residues: Acireductone dioxygenase (180 aa).

His-97, His-99, Glu-103, and His-141 together coordinate Fe(2+). Ni(2+) is bound by residues His-97, His-99, Glu-103, and His-141.

This sequence belongs to the acireductone dioxygenase (ARD) family. As to quaternary structure, monomer. Requires Fe(2+) as cofactor. The cofactor is Ni(2+).

It carries out the reaction 1,2-dihydroxy-5-(methylsulfanyl)pent-1-en-3-one + O2 = 3-(methylsulfanyl)propanoate + CO + formate + 2 H(+). It catalyses the reaction 1,2-dihydroxy-5-(methylsulfanyl)pent-1-en-3-one + O2 = 4-methylsulfanyl-2-oxobutanoate + formate + 2 H(+). Its pathway is amino-acid biosynthesis; L-methionine biosynthesis via salvage pathway; L-methionine from S-methyl-5-thio-alpha-D-ribose 1-phosphate: step 5/6. Catalyzes 2 different reactions between oxygen and the acireductone 1,2-dihydroxy-3-keto-5-methylthiopentene (DHK-MTPene) depending upon the metal bound in the active site. Fe-containing acireductone dioxygenase (Fe-ARD) produces formate and 2-keto-4-methylthiobutyrate (KMTB), the alpha-ketoacid precursor of methionine in the methionine recycle pathway. Ni-containing acireductone dioxygenase (Ni-ARD) produces methylthiopropionate, carbon monoxide and formate, and does not lie on the methionine recycle pathway. The sequence is that of Acireductone dioxygenase from Acidiphilium cryptum (strain JF-5).